Consider the following 427-residue polypeptide: Trigger factor (427 aa).

The PPIase FKBP-type domain maps to 163–248 (GDTVVIDFVG…IHEVKAKEVP (86 aa)).

It belongs to the FKBP-type PPIase family. Tig subfamily.

It is found in the cytoplasm. The catalysed reaction is [protein]-peptidylproline (omega=180) = [protein]-peptidylproline (omega=0). Functionally, involved in protein export. Acts as a chaperone by maintaining the newly synthesized protein in an open conformation. Functions as a peptidyl-prolyl cis-trans isomerase. The chain is Trigger factor from Streptococcus mutans serotype c (strain ATCC 700610 / UA159).